The primary structure comprises 155 residues: 3-hydroxyacyl-[acyl-carrier-protein] dehydratase FabZ (155 aa).

H61 is an active-site residue.

It belongs to the thioester dehydratase family. FabZ subfamily.

The protein localises to the cytoplasm. It catalyses the reaction a (3R)-hydroxyacyl-[ACP] = a (2E)-enoyl-[ACP] + H2O. Its function is as follows. Involved in unsaturated fatty acids biosynthesis. Catalyzes the dehydration of short chain beta-hydroxyacyl-ACPs and long chain saturated and unsaturated beta-hydroxyacyl-ACPs. This Synechococcus sp. (strain ATCC 27144 / PCC 6301 / SAUG 1402/1) (Anacystis nidulans) protein is 3-hydroxyacyl-[acyl-carrier-protein] dehydratase FabZ.